A 349-amino-acid polypeptide reads, in one-letter code: UDP-3-O-acylglucosamine N-acyltransferase (349 aa).

The active-site Proton acceptor is His240.

It belongs to the transferase hexapeptide repeat family. LpxD subfamily. Homotrimer.

It catalyses the reaction a UDP-3-O-[(3R)-3-hydroxyacyl]-alpha-D-glucosamine + a (3R)-hydroxyacyl-[ACP] = a UDP-2-N,3-O-bis[(3R)-3-hydroxyacyl]-alpha-D-glucosamine + holo-[ACP] + H(+). It functions in the pathway bacterial outer membrane biogenesis; LPS lipid A biosynthesis. Catalyzes the N-acylation of UDP-3-O-acylglucosamine using 3-hydroxyacyl-ACP as the acyl donor. Is involved in the biosynthesis of lipid A, a phosphorylated glycolipid that anchors the lipopolysaccharide to the outer membrane of the cell. This chain is UDP-3-O-acylglucosamine N-acyltransferase, found in Porphyromonas gingivalis (strain ATCC 33277 / DSM 20709 / CIP 103683 / JCM 12257 / NCTC 11834 / 2561).